Here is a 364-residue protein sequence, read N- to C-terminus: tRNA 2-selenouridine synthase (364 aa).

The Rhodanese domain occupies 14-137 (LLADTPLIDV…LRQTAIQATW (124 aa)). The S-selanylcysteine intermediate role is filled by Cys97.

It belongs to the SelU family. In terms of assembly, monomer.

It catalyses the reaction 5-methylaminomethyl-2-thiouridine(34) in tRNA + selenophosphate + (2E)-geranyl diphosphate + H2O + H(+) = 5-methylaminomethyl-2-selenouridine(34) in tRNA + (2E)-thiogeraniol + phosphate + diphosphate. It carries out the reaction 5-methylaminomethyl-2-thiouridine(34) in tRNA + (2E)-geranyl diphosphate = 5-methylaminomethyl-S-(2E)-geranyl-thiouridine(34) in tRNA + diphosphate. The enzyme catalyses 5-methylaminomethyl-S-(2E)-geranyl-thiouridine(34) in tRNA + selenophosphate + H(+) = 5-methylaminomethyl-2-(Se-phospho)selenouridine(34) in tRNA + (2E)-thiogeraniol. The catalysed reaction is 5-methylaminomethyl-2-(Se-phospho)selenouridine(34) in tRNA + H2O = 5-methylaminomethyl-2-selenouridine(34) in tRNA + phosphate. Its function is as follows. Involved in the post-transcriptional modification of the uridine at the wobble position (U34) of tRNA(Lys), tRNA(Glu) and tRNA(Gln). Catalyzes the conversion of 2-thiouridine (S2U-RNA) to 2-selenouridine (Se2U-RNA). Acts in a two-step process involving geranylation of 2-thiouridine (S2U) to S-geranyl-2-thiouridine (geS2U) and subsequent selenation of the latter derivative to 2-selenouridine (Se2U) in the tRNA chain. In Salmonella typhi, this protein is tRNA 2-selenouridine synthase.